The following is a 236-amino-acid chain: Ion-translocating oxidoreductase complex subunit E (236 aa).

The next 6 membrane-spanning stretches (helical) occupy residues 18–38 (ALVQ…ATNA), 39–59 (LGLG…VSAL), 69–89 (IPIY…LINA), 92–112 (FGLY…CIVI), 128–148 (ALDG…LGAL), and 182–202 (PFLL…MLAF). Residues 217-236 (RSAVGQALRGAAPTDNHEQA) are disordered.

The protein belongs to the NqrDE/RnfAE family. The complex is composed of six subunits: RnfA, RnfB, RnfC, RnfD, RnfE and RnfG.

The protein localises to the cell inner membrane. Its function is as follows. Part of a membrane-bound complex that couples electron transfer with translocation of ions across the membrane. The protein is Ion-translocating oxidoreductase complex subunit E of Edwardsiella ictaluri (strain 93-146).